The following is a 273-amino-acid chain: Putative phosphoenolpyruvate synthase regulatory protein (273 aa).

ADP is bound at residue 153–160; sequence GVSRSGKT.

It belongs to the pyruvate, phosphate/water dikinase regulatory protein family. PSRP subfamily.

The enzyme catalyses [pyruvate, water dikinase] + ADP = [pyruvate, water dikinase]-phosphate + AMP + H(+). It catalyses the reaction [pyruvate, water dikinase]-phosphate + phosphate + H(+) = [pyruvate, water dikinase] + diphosphate. Bifunctional serine/threonine kinase and phosphorylase involved in the regulation of the phosphoenolpyruvate synthase (PEPS) by catalyzing its phosphorylation/dephosphorylation. This is Putative phosphoenolpyruvate synthase regulatory protein from Polaromonas naphthalenivorans (strain CJ2).